The sequence spans 458 residues: Tyrosine phenol-lyase (458 aa).

Position 258 is an N6-(pyridoxal phosphate)lysine (Lys-258).

It belongs to the beta-eliminating lyase family. In terms of assembly, homotetramer. Pyridoxal 5'-phosphate serves as cofactor.

The catalysed reaction is L-tyrosine + H2O = phenol + pyruvate + NH4(+). In Pasteurella multocida (strain Pm70), this protein is Tyrosine phenol-lyase (tpl).